Here is a 232-residue protein sequence, read N- to C-terminus: Large ribosomal subunit protein uL1 (232 aa).

This sequence belongs to the universal ribosomal protein uL1 family. Part of the 50S ribosomal subunit.

Functionally, binds directly to 23S rRNA. The L1 stalk is quite mobile in the ribosome, and is involved in E site tRNA release. Its function is as follows. Protein L1 is also a translational repressor protein, it controls the translation of the L11 operon by binding to its mRNA. The sequence is that of Large ribosomal subunit protein uL1 from Ruegeria sp. (strain TM1040) (Silicibacter sp.).